A 390-amino-acid chain; its full sequence is Fluoride export protein 1 (390 aa).

A disordered region spans residues 1-22 (MVAPLVSESQSSSIEETDEQQQ). The Cytoplasmic portion of the chain corresponds to 1 to 72 (MVAPLVSESQ…RFLDKTQKYY (72 aa)). A helical transmembrane segment spans residues 73–93 (PVILNIVHGAIWGVLVRKGLM). Residues 94–100 (SLTTYSG) are Extracellular-facing. The helical transmembrane segment at 101–121 (SFLSGVIWANFAACVVMGLAI) threads the bilayer. At 122 to 143 (DGEVFWIRLLEEKDYPNKGAIP) the chain is on the cytoplasmic side. The chain crosses the membrane as a helical span at residues 144–164 (VYTGLTTGFCGTVSSFSSVIL). Residues 165–185 (EAFNKAADTDIGVRHHYPNGA) lie on the Extracellular side of the membrane. Residues 186 to 206 (YGIMQFLAVILAQFGLSIMGF) form a helical membrane-spanning segment. Over 207–229 (HMGKQFSAVVDNYLPLVTKRIYK) the chain is Cytoplasmic. The helical transmembrane segment at 230–250 (VLELTSMILGVVLVVITCILI) threads the bilayer. Over 251-256 (GVKKQG) the chain is Extracellular. A helical transmembrane segment spans residues 257 to 279 (SWRSWTFSMLFAPFGALLRYYLS). Residues 280-290 (KFLNNKVSNFP) lie on the Cytoplasmic side of the membrane. Residues 291 to 311 (LGTFTANFLGTLLLAVFTLLA) form a helical membrane-spanning segment. The Extracellular segment spans residues 312-338 (RGKLPGGKGHIVTNTIALHVLEGLDDG). Residues 339 to 359 (FCGGLTTVSTFVVELFGLKTL) form a helical membrane-spanning segment. Residues 360–368 (FSYRYGTIS) are Cytoplasmic-facing. Residues 369–389 (ILVCFAGVVLILGSYNWSVGL) form a helical membrane-spanning segment. Residue D390 is a topological domain, extracellular.

The protein belongs to the fluoride channel Fluc/FEX (TC 1.A.43) family.

The protein resides in the cell membrane. The enzyme catalyses fluoride(in) = fluoride(out). Its function is as follows. Fluoride channel required for the rapid expulsion of cytoplasmic fluoride. The chain is Fluoride export protein 1 from Candida albicans (strain SC5314 / ATCC MYA-2876) (Yeast).